The sequence spans 781 residues: Serine/threonine-protein kinase PLK4 (781 aa).

The 255-residue stretch at Tyr-14–Met-268 folds into the Protein kinase domain. ATP-binding positions include Leu-20–Val-28 and Lys-43. The active-site Proton acceptor is the Asp-139. Residues Thr-397 to Lys-514 form the Cryptic POLO box 1 (CPB1) domain. Residues Gln-463–Asn-486 are disordered. Positions Gln-473 to Asn-486 are enriched in polar residues. Positions Thr-515–Pro-618 constitute a Cryptic POLO box 2 (CPB2) domain. The POLO box domain maps to Pro-672 to Cys-751.

The protein belongs to the protein kinase superfamily. Ser/Thr protein kinase family. CDC5/Polo subfamily. As to quaternary structure, homodimer. Post-translationally, ubiquitinated by the SCF(Slimb) ubiquitin ligase complex; leading to its degradation by the proteasome during interphase and regulating centriole number and ensuring the block to centriole reduplication.

It is found in the cytoplasm. Its subcellular location is the cytoskeleton. The protein resides in the microtubule organizing center. It localises to the centrosome. The protein localises to the centriole. The enzyme catalyses L-seryl-[protein] + ATP = O-phospho-L-seryl-[protein] + ADP + H(+). It carries out the reaction L-threonyl-[protein] + ATP = O-phospho-L-threonyl-[protein] + ADP + H(+). Functionally, serine/threonine-protein kinase that plays a central role in centriole duplication. Able to trigger procentriole formation on the surface of the mother centriole cylinder, using mother centriole as a platform, leading to the recruitment of centriole biogenesis proteins such as sas-6. When overexpressed, it is able to induce centrosome amplification through the simultaneous generation of multiple procentrioles adjoining each parental centriole during S phase. Centrosome amplification following overexpression can initiate tumorigenesis, highlighting the importance of centrosome regulation in cancers. In Drosophila virilis (Fruit fly), this protein is Serine/threonine-protein kinase PLK4 (SAK).